We begin with the raw amino-acid sequence, 394 residues long: Dual-specificity RNA methyltransferase RlmN (394 aa).

The active-site Proton acceptor is Glu-115. The region spanning 121–363 (DEGRGTLCVS…SPIRTPRGED (243 aa)) is the Radical SAM core domain. A disulfide bridge links Cys-128 with Cys-368. Positions 135, 139, and 142 each coordinate [4Fe-4S] cluster. S-adenosyl-L-methionine-binding positions include 194 to 195 (GE), Ser-226, 248 to 250 (SFH), and Asn-325. Cys-368 acts as the S-methylcysteine intermediate in catalysis.

The protein belongs to the radical SAM superfamily. RlmN family. [4Fe-4S] cluster serves as cofactor.

It is found in the cytoplasm. The catalysed reaction is adenosine(2503) in 23S rRNA + 2 reduced [2Fe-2S]-[ferredoxin] + 2 S-adenosyl-L-methionine = 2-methyladenosine(2503) in 23S rRNA + 5'-deoxyadenosine + L-methionine + 2 oxidized [2Fe-2S]-[ferredoxin] + S-adenosyl-L-homocysteine. The enzyme catalyses adenosine(37) in tRNA + 2 reduced [2Fe-2S]-[ferredoxin] + 2 S-adenosyl-L-methionine = 2-methyladenosine(37) in tRNA + 5'-deoxyadenosine + L-methionine + 2 oxidized [2Fe-2S]-[ferredoxin] + S-adenosyl-L-homocysteine. In terms of biological role, specifically methylates position 2 of adenine 2503 in 23S rRNA and position 2 of adenine 37 in tRNAs. m2A2503 modification seems to play a crucial role in the proofreading step occurring at the peptidyl transferase center and thus would serve to optimize ribosomal fidelity. This is Dual-specificity RNA methyltransferase RlmN from Roseobacter denitrificans (strain ATCC 33942 / OCh 114) (Erythrobacter sp. (strain OCh 114)).